The following is a 1184-amino-acid chain: PR domain zinc finger protein 10 (1184 aa).

The disordered stretch occupies residues 122-162 (LDAKEEEEEEEDEDEDTEEEEEEDAEDTDVDDWQPDPPRPF). The span at 125–155 (KEEEEEEEDEDEDTEEEEEEDAEDTDVDDWQ) shows a compositional bias: acidic residues. The SET domain maps to 202–320 (LPLVLYIDRF…PKQELKVWYA (119 aa)). The tract at residues 221–325 (IPKRTQFGPV…KVWYAASYAE (105 aa)) is N-terminal PR domain; essential for transcriptional activator activity. The segment at 349 to 371 (WPCYECNRRFISSEQLQQHLNSH) adopts a C2H2-type 1 zinc-finger fold. Lys-374 is covalently cross-linked (Glycyl lysine isopeptide (Lys-Gly) (interchain with G-Cter in SUMO2)). Basic residues predominate over residues 381–401 (TRGRGRGRGKRRFGPGRRPGR). The interval 381-405 (TRGRGRGRGKRRFGPGRRPGRPPKF) is disordered. Ser-418 is subject to Phosphoserine. Thr-422 is subject to Phosphothreonine. The segment at 444 to 487 (GLDQPEQASIPIPQLPQETPPSLEQEPETHTLHLQPQQEESLVP) is disordered. The span at 475-487 (LHLQPQQEESLVP) shows a compositional bias: polar residues. 8 C2H2-type zinc fingers span residues 520 to 542 (FKCLQCGKAFREKDKLDQHLRFH), 550 to 572 (LTCDLCNKGFISSASLESHMKLH), 578 to 600 (YSCIFCPESFDRLDLLKDHVAIH), 606 to 629 (FTCPTCKKRFPDFIQVKKHVRSFH), 634 to 656 (YQCTECDKAFCRPDKLRLHMLRH), 662 to 685 (FLCSTCGKQFKRKDKLREHMQRMH), 717 to 740 (FKCRLCMMGFRRRGMLVNHLSKRH), and 850 to 873 (VCCPHCSKQYSSKTKMVQHIRKKH). Residues 917–1164 (QAMTELSQTL…TGPSQQQTTQ (248 aa)) form a C-terminal glutamine-rich region; essential for transcriptional activator activity region. The disordered stretch occupies residues 1004-1054 (EPAPAAPSASQVAGQPLSPSAQQVQQGLSPSHIQGSSSTQGQALQQQQNSS). Positions 1014–1036 (QVAGQPLSPSAQQVQQGLSPSHI) are enriched in polar residues. Residues 1037-1054 (QGSSSTQGQALQQQQNSS) are compositionally biased toward low complexity.

This sequence belongs to the class V-like SAM-binding methyltransferase superfamily. As to expression, present in brain, liver, kidney, spleen and thymus (at protein level).

It localises to the nucleus. Functionally, transcriptional activator, essential for early embryonic development and survival of embryonic stem cells (ESCs). Supports cell growth and survival during early development by transcriptionally activating the expression of the translation initiation factor EIF3B, to sustain global translation. Activates the transcription of FLNC. The polypeptide is PR domain zinc finger protein 10 (Prdm10) (Mus musculus (Mouse)).